The primary structure comprises 348 residues: Protein RecA (348 aa).

Residue 65–72 participates in ATP binding; the sequence is GPESSGKT.

It belongs to the RecA family.

It is found in the cytoplasm. In terms of biological role, can catalyze the hydrolysis of ATP in the presence of single-stranded DNA, the ATP-dependent uptake of single-stranded DNA by duplex DNA, and the ATP-dependent hybridization of homologous single-stranded DNAs. It interacts with LexA causing its activation and leading to its autocatalytic cleavage. The polypeptide is Protein RecA (Alteromonas mediterranea (strain DSM 17117 / CIP 110805 / LMG 28347 / Deep ecotype)).